Reading from the N-terminus, the 354-residue chain is Nicotinate-nucleotide--dimethylbenzimidazole phosphoribosyltransferase (354 aa).

The Proton acceptor role is filled by Glu319.

The protein belongs to the CobT family.

It catalyses the reaction 5,6-dimethylbenzimidazole + nicotinate beta-D-ribonucleotide = alpha-ribazole 5'-phosphate + nicotinate + H(+). It functions in the pathway nucleoside biosynthesis; alpha-ribazole biosynthesis; alpha-ribazole from 5,6-dimethylbenzimidazole: step 1/2. Catalyzes the synthesis of alpha-ribazole-5'-phosphate from nicotinate mononucleotide (NAMN) and 5,6-dimethylbenzimidazole (DMB). This Pelodictyon phaeoclathratiforme (strain DSM 5477 / BU-1) protein is Nicotinate-nucleotide--dimethylbenzimidazole phosphoribosyltransferase.